The following is a 118-amino-acid chain: Putative membrane protein insertion efficiency factor (118 aa).

The tract at residues 76-118 (WDPVPQRRPRRRDAAAADAAMSAPHACKGSPHAVVGDTNDGST) is disordered. Low complexity predominate over residues 91 to 101 (AADAAMSAPHA).

The protein belongs to the UPF0161 family.

Its subcellular location is the cell membrane. Functionally, could be involved in insertion of integral membrane proteins into the membrane. The protein is Putative membrane protein insertion efficiency factor of Nocardia farcinica (strain IFM 10152).